The following is a 593-amino-acid chain: Bifunctional lycopene cyclase/phytoene synthase (593 aa).

Positions 1–242 are lycopene beta-cyclase; it reads MAYDYALVHL…IVFGMAVFDQ (242 aa). 7 helical membrane-spanning segments follow: residues 8 to 28, 31 to 51, 77 to 97, 117 to 136, 147 to 167, 169 to 189, and 231 to 251; these read VHLK…YPIF, IHFL…LPWD, IEEL…YILL, IARG…LYGV, YLGL…TVAG, FILT…TVYL, and ILIV…FAFP. The segment at 249 to 593 is phytoene synthase; it reads AFPHLFPKVP…KTVLKALFSA (345 aa).

The protein in the N-terminal section; belongs to the lycopene beta-cyclase family. It in the C-terminal section; belongs to the phytoene/squalene synthase family.

The protein localises to the membrane. It carries out the reaction all-trans-lycopene = gamma-carotene. The catalysed reaction is gamma-carotene = all-trans-beta-carotene. It catalyses the reaction 2 (2E,6E,10E)-geranylgeranyl diphosphate = 15-cis-phytoene + 2 diphosphate. Its pathway is carotenoid biosynthesis; beta-carotene biosynthesis. It functions in the pathway carotenoid biosynthesis; phytoene biosynthesis; all-trans-phytoene from geranylgeranyl diphosphate: step 1/1. Bifunctional enzyme that catalyzes the reactions from geranylgeranyl diphosphate to phytoene (phytoene synthase) and lycopene to beta-carotene via the intermediate gamma-carotene (lycopene cyclase). The protein is Bifunctional lycopene cyclase/phytoene synthase of Podospora anserina (strain S / ATCC MYA-4624 / DSM 980 / FGSC 10383) (Pleurage anserina).